Consider the following 409-residue polypeptide: Tryptophan synthase beta chain (409 aa).

Lys98 carries the post-translational modification N6-(pyridoxal phosphate)lysine.

It belongs to the TrpB family. In terms of assembly, tetramer of two alpha and two beta chains. The cofactor is pyridoxal 5'-phosphate.

The enzyme catalyses (1S,2R)-1-C-(indol-3-yl)glycerol 3-phosphate + L-serine = D-glyceraldehyde 3-phosphate + L-tryptophan + H2O. The protein operates within amino-acid biosynthesis; L-tryptophan biosynthesis; L-tryptophan from chorismate: step 5/5. Functionally, the beta subunit is responsible for the synthesis of L-tryptophan from indole and L-serine. The protein is Tryptophan synthase beta chain (trpB) of Cereibacter sphaeroides (strain ATCC 17023 / DSM 158 / JCM 6121 / CCUG 31486 / LMG 2827 / NBRC 12203 / NCIMB 8253 / ATH 2.4.1.) (Rhodobacter sphaeroides).